We begin with the raw amino-acid sequence, 251 residues long: Hydroxyacylglutathione hydrolase (251 aa).

7 residues coordinate Zn(2+): His53, His55, Asp57, His58, His110, Asp127, and His165.

The protein belongs to the metallo-beta-lactamase superfamily. Glyoxalase II family. In terms of assembly, monomer. Zn(2+) serves as cofactor.

It carries out the reaction an S-(2-hydroxyacyl)glutathione + H2O = a 2-hydroxy carboxylate + glutathione + H(+). It functions in the pathway secondary metabolite metabolism; methylglyoxal degradation; (R)-lactate from methylglyoxal: step 2/2. Thiolesterase that catalyzes the hydrolysis of S-D-lactoyl-glutathione to form glutathione and D-lactic acid. This chain is Hydroxyacylglutathione hydrolase, found in Edwardsiella ictaluri (strain 93-146).